Here is a 605-residue protein sequence, read N- to C-terminus: Elongation factor 4 (605 aa).

Residues 11-193 form the tr-type G domain; sequence KRIRNFSIIA…RIVTQISPPK (183 aa). Residues 23–28 and 140–143 contribute to the GTP site; these read DHGKST and NKVD.

The protein belongs to the TRAFAC class translation factor GTPase superfamily. Classic translation factor GTPase family. LepA subfamily.

The protein resides in the cell membrane. It catalyses the reaction GTP + H2O = GDP + phosphate + H(+). Its function is as follows. Required for accurate and efficient protein synthesis under certain stress conditions. May act as a fidelity factor of the translation reaction, by catalyzing a one-codon backward translocation of tRNAs on improperly translocated ribosomes. Back-translocation proceeds from a post-translocation (POST) complex to a pre-translocation (PRE) complex, thus giving elongation factor G a second chance to translocate the tRNAs correctly. Binds to ribosomes in a GTP-dependent manner. This chain is Elongation factor 4, found in Phytoplasma australiense.